A 493-amino-acid polypeptide reads, in one-letter code: Protein LTV1 homolog (493 aa).

3 disordered regions span residues 42–63 (AAARQQKPKDPEPPTDPAQRQE), 97–119 (PNQARKQKVQDSEKPGPAPKLML), and 170–207 (IQAMAEGDSDDEEWDDEDGEEQSDMDFDSDDLNEDENE). The segment covering 176-207 (GDSDDEEWDDEDGEEQSDMDFDSDDLNEDENE) has biased composition (acidic residues). Ser-345, Ser-369, Ser-370, Ser-424, and Ser-427 each carry phosphoserine. Positions 359–387 (VIDEPRRSRRSSASTNPAPIQIDPKTGLP) are disordered. Positions 437–468 (KDETHEEKKERKRLLKDYRNERRIEKKANTEA) form a coiled coil. Positions 465–474 (NTEAFKEEKK) are enriched in basic and acidic residues. The interval 465–493 (NTEAFKEEKKRQTHVKINQRTNQQGASIV) is disordered. Residues 479 to 493 (VKINQRTNQQGASIV) are compositionally biased toward polar residues.

Belongs to the LTV1 family. As to quaternary structure, interacts with RpS3; the interaction is RNA-independent. Associates with free 40S ribosome subunits.

The protein localises to the cytoplasm. Necessary for the biogenesis of 40S ribosome subunits by regulating pre-rRNA processing. Non-ribosomal factor required for efficient nuclear export of the ribosomal 40S subunit. Necessary for endoreplication driven by Myc. This is Protein LTV1 homolog from Drosophila melanogaster (Fruit fly).